The following is a 273-amino-acid chain: XIAP-associated factor 1 (273 aa).

The TRAF-type zinc finger occupies 22 to 80; sequence LHEAHCLRFIVLCPECEEPIPESKMKEHMEVVHQQTKESQQHPAKCKFCELAVQLSNLD. Residues 181–228 are disordered; it reads GNRRSTVSKDVRPKTKNRNSSTKRETKKQNGTVALPLKSGLQQRADLP.

As to quaternary structure, interacts with BIRC1, BIRC2, BIRC3, BIRC4, BIRC7 and BIRC8. Part of an complex consisting of BIRC4, XAF1 and BIRC5; the complex formation requires IFN-beta stimulation. Interacts with RNF114, the interaction increases XAF1 stability and proapoptotic effects, and may regulate IFN signaling.

The protein localises to the cytoplasm. The protein resides in the nucleus. It localises to the mitochondrion. Seems to function as a negative regulator of members of the IAP (inhibitor of apoptosis protein) family. Inhibits anti-caspase activity of BIRC4. Induces cleavage and inactivation of BIRC4 independent of caspase activation. Mediates TNF-alpha-induced apoptosis and is involved in apoptosis in trophoblast cells. May inhibit BIRC4 indirectly by activating the mitochondrial apoptosis pathway. After translocation to mitochondria, promotes translocation of BAX to mitochondria and cytochrome c release from mitochondria. Seems to promote the redistribution of BIRC4 from the cytoplasm to the nucleus, probably independent of BIRC4 inactivation which seems to occur in the cytoplasm. The BIRC4-XAF1 complex mediates down-regulation of BIRC5/survivin; the process requires the E3 ligase activity of BIRC4. Seems to be involved in cellular sensitivity to the proapoptotic actions of TRAIL. May be a tumor suppressor by mediating apoptosis resistance of cancer cells. This is XIAP-associated factor 1 (Xaf1) from Mus musculus (Mouse).